The following is a 42-amino-acid chain: Photosystem II reaction center protein J (42 aa).

The helical transmembrane segment at 10–30 (IPLWIIGTLAGTLVIGLLAIF) threads the bilayer.

It belongs to the PsbJ family. As to quaternary structure, PSII is composed of 1 copy each of membrane proteins PsbA, PsbB, PsbC, PsbD, PsbE, PsbF, PsbH, PsbI, PsbJ, PsbK, PsbL, PsbM, PsbT, PsbX, PsbY, PsbZ, Psb30/Ycf12, at least 3 peripheral proteins of the oxygen-evolving complex and a large number of cofactors. It forms dimeric complexes.

Its subcellular location is the plastid. The protein resides in the chloroplast thylakoid membrane. Functionally, one of the components of the core complex of photosystem II (PSII). PSII is a light-driven water:plastoquinone oxidoreductase that uses light energy to abstract electrons from H(2)O, generating O(2) and a proton gradient subsequently used for ATP formation. It consists of a core antenna complex that captures photons, and an electron transfer chain that converts photonic excitation into a charge separation. This chain is Photosystem II reaction center protein J, found in Chaetosphaeridium globosum (Charophycean green alga).